The following is a 215-amino-acid chain: Large ribosomal subunit protein uL1 (215 aa).

The protein belongs to the universal ribosomal protein uL1 family. As to quaternary structure, part of the 50S ribosomal subunit.

Functionally, binds directly to 23S rRNA. Probably involved in E site tRNA release. Protein L1 is also a translational repressor protein, it controls the translation of its operon by binding to its mRNA. The protein is Large ribosomal subunit protein uL1 of Methanospirillum hungatei JF-1 (strain ATCC 27890 / DSM 864 / NBRC 100397 / JF-1).